A 208-amino-acid chain; its full sequence is Large ribosomal subunit protein uL4 (208 aa).

Residues 45-77 form a disordered region; that stretch reads RQGTHKAKERAEIKGSTRKIKKQKGTGTARAGS.

The protein belongs to the universal ribosomal protein uL4 family. As to quaternary structure, part of the 50S ribosomal subunit.

In terms of biological role, one of the primary rRNA binding proteins, this protein initially binds near the 5'-end of the 23S rRNA. It is important during the early stages of 50S assembly. It makes multiple contacts with different domains of the 23S rRNA in the assembled 50S subunit and ribosome. Forms part of the polypeptide exit tunnel. The chain is Large ribosomal subunit protein uL4 from Christiangramia forsetii (strain DSM 17595 / CGMCC 1.15422 / KT0803) (Gramella forsetii).